A 146-amino-acid chain; its full sequence is Hemoglobin subunit beta (146 aa).

Val1 is subject to N-acetylvaline. One can recognise a Globin domain in the interval 2–146 (HLTGEEKSAV…VANALAHKYH (145 aa)). Thr12 bears the Phosphothreonine mark. Ser44 is modified (phosphoserine). Position 59 is an N6-acetyllysine (Lys59). Residue His63 coordinates heme b. Residue Lys82 is modified to N6-acetyllysine. Position 92 (His92) interacts with heme b. At Cys93 the chain carries S-nitrosocysteine. Position 144 is an N6-acetyllysine (Lys144).

The protein belongs to the globin family. As to quaternary structure, heterotetramer of two alpha chains and two beta chains. In terms of tissue distribution, red blood cells.

Its function is as follows. Involved in oxygen transport from the lung to the various peripheral tissues. This chain is Hemoglobin subunit beta (HBB), found in Phoca vitulina (Harbor seal).